A 381-amino-acid chain; its full sequence is Protein-glutamate methylesterase/protein-glutamine glutaminase (381 aa).

The 118-residue stretch at 8 to 125 (QVLCIDDSAL…RDGMNEYADQ (118 aa)) folds into the Response regulatory domain. Aspartate 59 carries the post-translational modification 4-aspartylphosphate. The region spanning 183–375 (FSSTEKLIIV…PHVLARLSAH (193 aa)) is the CheB-type methylesterase domain. Catalysis depends on residues serine 195, histidine 221, and aspartate 317.

It belongs to the CheB family. Post-translationally, phosphorylated by CheA. Phosphorylation of the N-terminal regulatory domain activates the methylesterase activity.

It is found in the cytoplasm. The enzyme catalyses [protein]-L-glutamate 5-O-methyl ester + H2O = L-glutamyl-[protein] + methanol + H(+). It carries out the reaction L-glutaminyl-[protein] + H2O = L-glutamyl-[protein] + NH4(+). Its function is as follows. Involved in chemotaxis. Part of a chemotaxis signal transduction system that modulates chemotaxis in response to various stimuli. Catalyzes the demethylation of specific methylglutamate residues introduced into the chemoreceptors (methyl-accepting chemotaxis proteins or MCP) by CheR. Also mediates the irreversible deamidation of specific glutamine residues to glutamic acid. This is Protein-glutamate methylesterase/protein-glutamine glutaminase from Ralstonia nicotianae (strain ATCC BAA-1114 / GMI1000) (Ralstonia solanacearum).